The sequence spans 153 residues: Large ribosomal subunit protein uL13 (153 aa).

A disordered region spans residues 134 to 153 (EAQQPQALDVGSLNRKNVSA).

Belongs to the universal ribosomal protein uL13 family. In terms of assembly, part of the 50S ribosomal subunit.

This protein is one of the early assembly proteins of the 50S ribosomal subunit, although it is not seen to bind rRNA by itself. It is important during the early stages of 50S assembly. This chain is Large ribosomal subunit protein uL13, found in Methylorubrum extorquens (strain CM4 / NCIMB 13688) (Methylobacterium extorquens).